The chain runs to 459 residues: MHDRLIDENPTCGFVRLGLDVRSRVIVLGLGATGLSTVRFLRCHGFECAVMDSRLAPPGLQDLREAFPDVPLFLGDFSRSALAAATHLVVSPGLSLDLAEIRESHRCGVRVFGDLDLFACCVRAPVVAITGANGKSTVTTLVGLMAKAAGVNAAVGGNLGTPMLDLLDAAAELYVLELSSFQLERSELFEADVATVLNISPDHMDRYPDLASYAEAKRRVFRGEGLMVLNQDDPLVAAMYRPGRRAVRFGLGSGDELDYSLARWEGRAWLLAKGVPLLPADEVRIKGRHNLANALAAVAIADACGFDRQAMVGVLRTFPGLDHRMQWVADIGGVAYVNDSKATNVGACIAALSGLEGKVVLIAGGDGKGADFSSLVPVAAEKLRAAVLMGRDGPLIDEVLKGVVPTIRVKTMFEAVRAARGVAQSGDTVLLAPACASLDQYEDYQERGRDFAATVRSLA.

131–137 (GANGKST) provides a ligand contact to ATP.

The protein belongs to the MurCDEF family.

The protein localises to the cytoplasm. The enzyme catalyses UDP-N-acetyl-alpha-D-muramoyl-L-alanine + D-glutamate + ATP = UDP-N-acetyl-alpha-D-muramoyl-L-alanyl-D-glutamate + ADP + phosphate + H(+). It functions in the pathway cell wall biogenesis; peptidoglycan biosynthesis. Cell wall formation. Catalyzes the addition of glutamate to the nucleotide precursor UDP-N-acetylmuramoyl-L-alanine (UMA). This is UDP-N-acetylmuramoylalanine--D-glutamate ligase from Methylococcus capsulatus (strain ATCC 33009 / NCIMB 11132 / Bath).